A 223-amino-acid chain; its full sequence is Large ribosomal subunit protein uL4 (223 aa).

The disordered stretch occupies residues 47-72 (GTASTKTRGEVAGGGRKPWPQKHTGR).

This sequence belongs to the universal ribosomal protein uL4 family. Part of the 50S ribosomal subunit.

In terms of biological role, one of the primary rRNA binding proteins, this protein initially binds near the 5'-end of the 23S rRNA. It is important during the early stages of 50S assembly. It makes multiple contacts with different domains of the 23S rRNA in the assembled 50S subunit and ribosome. Forms part of the polypeptide exit tunnel. This chain is Large ribosomal subunit protein uL4, found in Fervidobacterium nodosum (strain ATCC 35602 / DSM 5306 / Rt17-B1).